A 338-amino-acid polypeptide reads, in one-letter code: Glyceraldehyde-3-phosphate dehydrogenase (338 aa).

NAD(+) is bound by residues 11–12 (TI) and Gly-111. A D-glyceraldehyde 3-phosphate-binding site is contributed by 140–142 (SCN). The active-site Nucleophile is Cys-141. Arg-169 provides a ligand contact to NAD(+). A D-glyceraldehyde 3-phosphate-binding site is contributed by 195–196 (HG). Gln-302 provides a ligand contact to NAD(+).

It belongs to the glyceraldehyde-3-phosphate dehydrogenase family. In terms of assembly, homotetramer.

The protein localises to the cytoplasm. It catalyses the reaction D-glyceraldehyde 3-phosphate + phosphate + NADP(+) = (2R)-3-phospho-glyceroyl phosphate + NADPH + H(+). The catalysed reaction is D-glyceraldehyde 3-phosphate + phosphate + NAD(+) = (2R)-3-phospho-glyceroyl phosphate + NADH + H(+). It functions in the pathway carbohydrate degradation; glycolysis; pyruvate from D-glyceraldehyde 3-phosphate: step 1/5. The sequence is that of Glyceraldehyde-3-phosphate dehydrogenase (gap) from Methanobacterium formicicum.